The following is a 522-amino-acid chain: Cytochrome P450 1A1 (522 aa).

F229 provides a ligand contact to substrate. C463 provides a ligand contact to heme.

Belongs to the cytochrome P450 family. The cofactor is heme. Liver.

Its subcellular location is the endoplasmic reticulum membrane. The protein localises to the microsome membrane. The enzyme catalyses an organic molecule + reduced [NADPH--hemoprotein reductase] + O2 = an alcohol + oxidized [NADPH--hemoprotein reductase] + H2O + H(+). Cytochromes P450 are a group of heme-thiolate monooxygenases. They oxidize a variety of structurally unrelated compounds, including steroids, fatty acids, and xenobiotics. The sequence is that of Cytochrome P450 1A1 (cyp1a1) from Oncorhynchus mykiss (Rainbow trout).